The sequence spans 338 residues: Tetraacyldisaccharide 4'-kinase (338 aa).

65–72 (TVGGTGKT) contributes to the ATP binding site.

The protein belongs to the LpxK family.

The enzyme catalyses a lipid A disaccharide + ATP = a lipid IVA + ADP + H(+). The protein operates within glycolipid biosynthesis; lipid IV(A) biosynthesis; lipid IV(A) from (3R)-3-hydroxytetradecanoyl-[acyl-carrier-protein] and UDP-N-acetyl-alpha-D-glucosamine: step 6/6. Transfers the gamma-phosphate of ATP to the 4'-position of a tetraacyldisaccharide 1-phosphate intermediate (termed DS-1-P) to form tetraacyldisaccharide 1,4'-bis-phosphate (lipid IVA). This is Tetraacyldisaccharide 4'-kinase from Paraburkholderia xenovorans (strain LB400).